A 273-amino-acid polypeptide reads, in one-letter code: Large ribosomal subunit protein uL2 (273 aa).

Disordered stretches follow at residues 28-53 and 221-273; these read KPFAPLLEKNSKSGGRNNNGRITTRH and RGTA…RRSK. A compositionally biased stretch (low complexity) spans 39-48; it reads KSGGRNNNGR. An N6-acetyllysine modification is found at Lys-242.

This sequence belongs to the universal ribosomal protein uL2 family. Part of the 50S ribosomal subunit. Forms a bridge to the 30S subunit in the 70S ribosome.

Its function is as follows. One of the primary rRNA binding proteins. Required for association of the 30S and 50S subunits to form the 70S ribosome, for tRNA binding and peptide bond formation. It has been suggested to have peptidyltransferase activity; this is somewhat controversial. Makes several contacts with the 16S rRNA in the 70S ribosome. In Shigella dysenteriae serotype 1 (strain Sd197), this protein is Large ribosomal subunit protein uL2.